A 305-amino-acid chain; its full sequence is Tyrosine recombinase XerC (305 aa).

The Core-binding (CB) domain occupies 4 to 95 (TSIQELIDKW…AVKNFYRFLE (92 aa)). In terms of domain architecture, Tyr recombinase spans 116–298 (LLPKALSEDD…SIKHLEAVYT (183 aa)). Active-site residues include Arg-159, Lys-182, His-250, Arg-253, and His-276. Residue Tyr-285 is the O-(3'-phospho-DNA)-tyrosine intermediate of the active site.

Belongs to the 'phage' integrase family. XerC subfamily. Forms a cyclic heterotetrameric complex composed of two molecules of XerC and two molecules of XerD.

It localises to the cytoplasm. In terms of biological role, site-specific tyrosine recombinase, which acts by catalyzing the cutting and rejoining of the recombining DNA molecules. The XerC-XerD complex is essential to convert dimers of the bacterial chromosome into monomers to permit their segregation at cell division. It also contributes to the segregational stability of plasmids. The protein is Tyrosine recombinase XerC of Rickettsia felis (strain ATCC VR-1525 / URRWXCal2) (Rickettsia azadi).